The chain runs to 336 residues: tRNA N6-adenosine threonylcarbamoyltransferase (336 aa).

Fe cation is bound by residues H108 and H112. Residues 129-133 (LISGG), D161, E178, and S258 contribute to the substrate site. D286 contributes to the Fe cation binding site.

Belongs to the KAE1 / TsaD family. Requires Fe(2+) as cofactor.

The protein resides in the cytoplasm. The enzyme catalyses L-threonylcarbamoyladenylate + adenosine(37) in tRNA = N(6)-L-threonylcarbamoyladenosine(37) in tRNA + AMP + H(+). In terms of biological role, required for the formation of a threonylcarbamoyl group on adenosine at position 37 (t(6)A37) in tRNAs that read codons beginning with adenine. Is probably involved in the transfer of the threonylcarbamoyl moiety of threonylcarbamoyl-AMP (TC-AMP) to the N6 group of A37. The polypeptide is tRNA N6-adenosine threonylcarbamoyltransferase (Pyrobaculum neutrophilum (strain DSM 2338 / JCM 9278 / NBRC 100436 / V24Sta) (Thermoproteus neutrophilus)).